Consider the following 378-residue polypeptide: MDLVALLKSHFLCHLIFCYVFIVSGLIINTIQLCTLLLWPVNKQLFRKINCRLSYCVSSQLVMLLEWWSGTECVIYTDPRAYPKYGKENAIVVLNHKFEIDFLCGWSLAERFGVLGGSKVLAKKELAYVPIIGWMWYFTEMVFCTRKWEQDRKTVSESLLHLRDYPEKYFFLIHCEGTRFTEKKHQISMQVAQAKGLPSLKHHLLPRTKGFAVTVRSLRNVVSAVYDCTLNFRNNENPTLLGVLNGKKYHADLYVRRIPLEEVPEEEDKCAAWLHKLYQEKDAFQEEYSRTGTFPETPVVPPRRPWTLVNWLFWASMLLYPFFRFVINMVSSGSSLTLASFVLVFFVASMGVRWMIGVTEIDKGSAYGNMDSKQKHSD.

A helical membrane pass occupies residues 11–31 (FLCHLIFCYVFIVSGLIINTI). Residues 96–101 (HKFEID) carry the HXXXXD motif motif. 3 consecutive transmembrane segments (helical) span residues 125–145 (ELAY…VFCT), 307–327 (TLVN…RFVI), and 338–358 (LASF…MIGV).

It belongs to the 1-acyl-sn-glycerol-3-phosphate acyltransferase family.

The protein resides in the endoplasmic reticulum membrane. It carries out the reaction a 1-acyl-sn-glycero-3-phosphate + an acyl-CoA = a 1,2-diacyl-sn-glycero-3-phosphate + CoA. It catalyses the reaction (4Z,7Z,10Z,13Z,16Z,19Z)-docosahexaenoyl-CoA + 1-hexadecanoyl-sn-glycero-3-phosphate = 1-hexadecanoyl-2-(4Z,7Z,10Z,13Z,16Z,19Z-docosahexaenoyl)-sn-glycero-3-phosphate + CoA. The catalysed reaction is 1-octadecanoyl-sn-glycero-3-phosphate + (9Z,12Z)-octadecadienoyl-CoA = 1-octadecanoyl-2-(9Z,12Z-octadecadienoyl)-sn-glycero-3-phosphate + CoA. The enzyme catalyses 1-octadecanoyl-sn-glycero-3-phosphate + (4Z,7Z,10Z,13Z,16Z,19Z)-docosahexaenoyl-CoA = 1-octadecanoyl-2-(4Z,7Z,10Z,13Z,16Z,19Z-docosahexaenoyl)-sn-glycero-3-phosphate + CoA. It carries out the reaction (4Z,7Z,10Z,13Z,16Z,19Z)-docosahexaenoyl-CoA + 1-(9Z-octadecenoyl)-sn-glycero-3-phosphate = 1-(9Z-octadecenoyl)-2-(4Z,7Z,10Z,13Z,16Z,19Z-docosahexaenoyl)-sn-glycero-3-phosphate + CoA. It functions in the pathway phospholipid metabolism; CDP-diacylglycerol biosynthesis; CDP-diacylglycerol from sn-glycerol 3-phosphate: step 2/3. Functionally, converts 1-acyl-sn-glycerol-3-phosphate (lysophosphatidic acid or LPA) into 1,2-diacyl-sn-glycerol-3-phosphate (phosphatidic acid or PA) by incorporating an acyl moiety at the sn-2 position of the glycerol backbone. Exhibits high acyl-CoA specificity for polyunsaturated fatty acyl-CoA, especially docosahexaenoyl-CoA (22:6-CoA, DHA-CoA). The chain is 1-acyl-sn-glycerol-3-phosphate acyltransferase delta (AGPAT4) from Bos taurus (Bovine).